Here is a 271-residue protein sequence, read N- to C-terminus: Phosphate import ATP-binding protein PstB 3 (271 aa).

Residues 20 to 266 (LRVEGLGFYY…PQETQTRDYV (247 aa)) form the ABC transporter domain. 52-59 (GPSGCGKS) serves as a coordination point for ATP.

The protein belongs to the ABC transporter superfamily. Phosphate importer (TC 3.A.1.7) family. In terms of assembly, the complex is composed of two ATP-binding proteins (PstB), two transmembrane proteins (PstC and PstA) and a solute-binding protein (PstS).

The protein resides in the cell inner membrane. The enzyme catalyses phosphate(out) + ATP + H2O = ADP + 2 phosphate(in) + H(+). In terms of biological role, part of the ABC transporter complex PstSACB involved in phosphate import. Responsible for energy coupling to the transport system. In Synechocystis sp. (strain ATCC 27184 / PCC 6803 / Kazusa), this protein is Phosphate import ATP-binding protein PstB 3.